We begin with the raw amino-acid sequence, 1374 residues long: DNA-directed RNA polymerase subunit beta (1374 aa).

Belongs to the RNA polymerase beta chain family. In terms of assembly, the RNAP catalytic core consists of 2 alpha, 1 beta, 1 beta' and 1 omega subunit. When a sigma factor is associated with the core the holoenzyme is formed, which can initiate transcription.

The catalysed reaction is RNA(n) + a ribonucleoside 5'-triphosphate = RNA(n+1) + diphosphate. In terms of biological role, DNA-dependent RNA polymerase catalyzes the transcription of DNA into RNA using the four ribonucleoside triphosphates as substrates. The polypeptide is DNA-directed RNA polymerase subunit beta (Rickettsia typhi (strain ATCC VR-144 / Wilmington)).